Consider the following 34-residue polypeptide: Photosystem I reaction center subunit XII (34 aa).

The helical transmembrane segment at 5–25 (ISSPEIFIALVVAAHAAILAL) threads the bilayer.

This sequence belongs to the PsaM family.

It is found in the cellular thylakoid membrane. The protein is Photosystem I reaction center subunit XII of Synechococcus sp. (strain CC9902).